Here is a 431-residue protein sequence, read N- to C-terminus: Saglin (431 aa).

An N-terminal signal peptide occupies residues 1-39 (MSVRDYSGVQVISSRKHRSMSRLPTVLLLLASAAVLAAG). N-linked (GlcNAc...) asparagine glycosylation is present at Asn-95. Positions 120–169 (LDDAQRQMEQEHRQYAATLEEQLHAAQQETQQEQEMKKALQKQLDALTDS) form a coiled coil.

Homodimer. In terms of tissue distribution, female salivary gland (at protein level). Not detected in female carcass without salivary glands, midgut and hemolymph (at protein level). Probably not expressed in male tissues.

It is found in the secreted. (Microbial infection) Facilitates efficient midgut colonization by Plasmodium berghei parasites. Promotes successful transmission of Plasmodium berghei at low infection densities. Its function is as follows. (Microbial infection) Facilitates efficient midgut colonization by Plasmodium falciparum. This chain is Saglin, found in Anopheles coluzzii (African malaria mosquito).